Consider the following 469-residue polypeptide: Gustatory receptor for sugar taste 64f (469 aa).

The Cytoplasmic portion of the chain corresponds to 1 to 117 (MKILPKLERK…SFSWRNIRTC (117 aa)). A helical transmembrane segment spans residues 118-138 (FSLLFIASSLANFGLSLFKVL). The Extracellular segment spans residues 139-146 (NNPISFNS). The chain crosses the membrane as a helical span at residues 147–167 (IKPIIFRGSVLLVLIVALNLA). At 168 to 199 (RQWPQLMMYWHTVEKDLPQYKTQLTKWKMGHT) the chain is on the cytoplasmic side. A helical membrane pass occupies residues 200–220 (ISMVMLLGMMLSFAEHILSMV). Topologically, residues 221–265 (SAINYASFCNRTADPIQNYFLRTNDEIFFVTSYSTTLALWGKFQN) are extracellular. N-linked (GlcNAc...) asparagine glycosylation is present at Asn230. The chain crosses the membrane as a helical span at residues 266 to 286 (VFSTFIWNYMDLFVMIVSIGL). Residues 287–330 (ASKFRQLNDDLRNFKGMNMAPSYWSERRIQYRNICILCDKMDDA) are Cytoplasmic-facing. The helical transmembrane segment at 331-351 (ISLITMVSFSNNLYFICVQLL) threads the bilayer. The Extracellular portion of the chain corresponds to 352-353 (RS). Residues 354–374 (LNTMPSVAHAVYFYFSLIFLI) form a helical membrane-spanning segment. Topologically, residues 375 to 435 (GRTLAVSLYS…GMKFFHLTRK (61 aa)) are cytoplasmic. The chain crosses the membrane as a helical span at residues 436–456 (LVLSVAGTIVTYELVLIQFHE). At 457–469 (DNDLWDCDQSYYS) the chain is on the extracellular side.

The protein belongs to the insect chemoreceptor superfamily. Gustatory receptor (GR) family. Gr5a subfamily. Expressed in Gr5a-expressing sugar-sensing cells.

It localises to the cell membrane. Functionally, one of the few identified sugar gustatory receptors identified so far and which promotes the starvation-induced increase of feeding motivation. Required in combination with Gr64a to detect sucrose, maltose, and glucose. In Drosophila melanogaster (Fruit fly), this protein is Gustatory receptor for sugar taste 64f (Gr64f).